Consider the following 316-residue polypeptide: Probable 5-dehydro-4-deoxyglucarate dehydratase (316 aa).

It belongs to the DapA family.

It catalyses the reaction 5-dehydro-4-deoxy-D-glucarate + H(+) = 2,5-dioxopentanoate + CO2 + H2O. The protein operates within carbohydrate acid metabolism; D-glucarate degradation; 2,5-dioxopentanoate from D-glucarate: step 2/2. This Corynebacterium glutamicum (strain ATCC 13032 / DSM 20300 / JCM 1318 / BCRC 11384 / CCUG 27702 / LMG 3730 / NBRC 12168 / NCIMB 10025 / NRRL B-2784 / 534) protein is Probable 5-dehydro-4-deoxyglucarate dehydratase.